A 256-amino-acid chain; its full sequence is Signal peptidase I (256 aa).

Residues S32 and K75 contribute to the active site.

This sequence belongs to the peptidase S26 family.

The catalysed reaction is Cleavage of hydrophobic, N-terminal signal or leader sequences from secreted and periplasmic proteins.. This Aquifex aeolicus (strain VF5) protein is Signal peptidase I (lepB).